The primary structure comprises 121 residues: Large ribosomal subunit protein bL12 (121 aa).

It belongs to the bacterial ribosomal protein bL12 family. As to quaternary structure, homodimer. Part of the ribosomal stalk of the 50S ribosomal subunit. Forms a multimeric L10(L12)X complex, where L10 forms an elongated spine to which 2 to 4 L12 dimers bind in a sequential fashion. Binds GTP-bound translation factors.

In terms of biological role, forms part of the ribosomal stalk which helps the ribosome interact with GTP-bound translation factors. Is thus essential for accurate translation. This chain is Large ribosomal subunit protein bL12, found in Streptococcus suis (strain 98HAH33).